The chain runs to 254 residues: NAD kinase (254 aa).

D44 acts as the Proton acceptor in catalysis. Residues 44-45 (DG), 114-115 (NE), D144, A152, 155-160 (TAYNYS), and A179 contribute to the NAD(+) site.

This sequence belongs to the NAD kinase family. It depends on a divalent metal cation as a cofactor.

It is found in the cytoplasm. It catalyses the reaction NAD(+) + ATP = ADP + NADP(+) + H(+). Functionally, involved in the regulation of the intracellular balance of NAD and NADP, and is a key enzyme in the biosynthesis of NADP. Catalyzes specifically the phosphorylation on 2'-hydroxyl of the adenosine moiety of NAD to yield NADP. The polypeptide is NAD kinase (Cereibacter sphaeroides (strain ATCC 17023 / DSM 158 / JCM 6121 / CCUG 31486 / LMG 2827 / NBRC 12203 / NCIMB 8253 / ATH 2.4.1.) (Rhodobacter sphaeroides)).